A 416-amino-acid polypeptide reads, in one-letter code: LL-diaminopimelate aminotransferase (416 aa).

2 residues coordinate substrate: tyrosine 15 and glycine 42. Residues tyrosine 72, 108-109 (SK), tyrosine 132, asparagine 187, tyrosine 218, and 246-248 (SFS) contribute to the pyridoxal 5'-phosphate site. Residues lysine 109, tyrosine 132, and asparagine 187 each coordinate substrate. Lysine 249 is modified (N6-(pyridoxal phosphate)lysine). 2 residues coordinate pyridoxal 5'-phosphate: arginine 257 and asparagine 292. Substrate contacts are provided by asparagine 292 and arginine 388.

This sequence belongs to the class-I pyridoxal-phosphate-dependent aminotransferase family. LL-diaminopimelate aminotransferase subfamily. As to quaternary structure, homodimer. It depends on pyridoxal 5'-phosphate as a cofactor.

It catalyses the reaction (2S,6S)-2,6-diaminopimelate + 2-oxoglutarate = (S)-2,3,4,5-tetrahydrodipicolinate + L-glutamate + H2O + H(+). Its pathway is amino-acid biosynthesis; L-lysine biosynthesis via DAP pathway; LL-2,6-diaminopimelate from (S)-tetrahydrodipicolinate (aminotransferase route): step 1/1. Functionally, involved in the synthesis of meso-diaminopimelate (m-DAP or DL-DAP), required for both lysine and peptidoglycan biosynthesis. Catalyzes the direct conversion of tetrahydrodipicolinate to LL-diaminopimelate. The polypeptide is LL-diaminopimelate aminotransferase (Synechococcus sp. (strain JA-2-3B'a(2-13)) (Cyanobacteria bacterium Yellowstone B-Prime)).